Reading from the N-terminus, the 114-residue chain is Replication initiation control protein YabA (114 aa).

4 residues coordinate Zn(2+): His84, Cys86, Cys102, and Cys105.

Belongs to the YabA family. As to quaternary structure, homotetramer. Interacts with both DnaA and DnaN, acting as a bridge between these two proteins. Zn(2+) is required as a cofactor.

Its subcellular location is the cytoplasm. It localises to the nucleoid. Its function is as follows. Involved in control of chromosome replication initiation. Inhibits the cooperative binding of DnaA to the oriC region, thus negatively regulating initiation of chromosome replication. Inhibits the ability of DnaA-ATP to form a helix on DNA; does not disassemble preformed DnaA-DNA helices. Decreases the residence time of DnaA on the chromosome at its binding sites (oriC, replication forks and promoter-binding sites). Tethers DnaA to the replication machinery via the DNA polymerase beta sliding clamp subunit (dnaN). Associates with oriC and other DnaA targets on the chromosome in a DnaA-dependent manner. The protein is Replication initiation control protein YabA of Ligilactobacillus salivarius (strain UCC118) (Lactobacillus salivarius).